The chain runs to 366 residues: DNA primase large subunit PriL (366 aa).

Cys-227, Cys-298, Cys-307, and Cys-314 together coordinate [4Fe-4S] cluster.

The protein belongs to the eukaryotic-type primase large subunit family. As to quaternary structure, heterodimer of a small subunit (PriS) and a large subunit (PriL). [4Fe-4S] cluster is required as a cofactor.

Its function is as follows. Regulatory subunit of DNA primase, an RNA polymerase that catalyzes the synthesis of short RNA molecules used as primers for DNA polymerase during DNA replication. Stabilizes and modulates the activity of the small subunit, increasing the rate of DNA synthesis, and conferring RNA synthesis capability. The DNA polymerase activity may enable DNA primase to also catalyze primer extension after primer synthesis. May also play a role in DNA repair. This Methanocella arvoryzae (strain DSM 22066 / NBRC 105507 / MRE50) protein is DNA primase large subunit PriL.